The chain runs to 580 residues: Alpha-thujene synthase TPS3, chloroplastic (580 aa).

The transit peptide at 1-26 (MALQLLTPSFSFQHSPSPHRLTTLRY) directs the protein to the chloroplast. Arg-296, Asp-333, Asp-337, Arg-473, and Asp-476 together coordinate (2E)-geranyl diphosphate. Residues Asp-333 and Asp-337 each coordinate Mg(2+). Residues 333–337 (DDVYD) carry the DDXXD motif motif. 3 residues coordinate Mg(2+): Asp-476, Thr-480, and Glu-484.

The protein belongs to the terpene synthase family. Tpsb subfamily. Monomer. It depends on Mg(2+) as a cofactor. The cofactor is Mn(2+). As to expression, mostly expressed in developing and mature fruits, and, to a lower extent, in male leaves. Barely detectable in female leaves and shoots.

The protein localises to the plastid. Its subcellular location is the chloroplast. The enzyme catalyses (2E)-geranyl diphosphate = alpha-thujene + diphosphate. It carries out the reaction (2E)-geranyl diphosphate = (1R,5R)-sabinene + diphosphate. It participates in secondary metabolite biosynthesis; terpenoid biosynthesis. In terms of biological role, monoterpene synthase (TPS) involved in the biosynthesis of monoterpene natural products used by traditional Chinese medicine to treat headache, inflammation and intoxication. Catalyzes the conversion of (2E)-geranyl diphosphate (GPP) into alpha-thujene and (1R,5R)-sabinene. The protein is Alpha-thujene synthase TPS3, chloroplastic of Litsea cubeba (Aromatic litsea).